The primary structure comprises 144 residues: 3-dehydroquinate dehydratase (144 aa).

The Proton acceptor role is filled by Y22. Residues N71, H77, and D84 each coordinate substrate. The active-site Proton donor is the H97. Substrate is bound by residues 98-99 (IS) and R108.

Belongs to the type-II 3-dehydroquinase family. Homododecamer.

The catalysed reaction is 3-dehydroquinate = 3-dehydroshikimate + H2O. It functions in the pathway metabolic intermediate biosynthesis; chorismate biosynthesis; chorismate from D-erythrose 4-phosphate and phosphoenolpyruvate: step 3/7. Catalyzes a trans-dehydration via an enolate intermediate. The chain is 3-dehydroquinate dehydratase from Thermotoga petrophila (strain ATCC BAA-488 / DSM 13995 / JCM 10881 / RKU-1).